Consider the following 208-residue polypeptide: Thymidylate kinase (208 aa).

G10–S17 is an ATP binding site.

This sequence belongs to the thymidylate kinase family.

The catalysed reaction is dTMP + ATP = dTDP + ADP. Phosphorylation of dTMP to form dTDP in both de novo and salvage pathways of dTTP synthesis. This is Thymidylate kinase from Jannaschia sp. (strain CCS1).